Reading from the N-terminus, the 147-residue chain is Large ribosomal subunit protein uL13 (147 aa).

Residues Pro128 to Gln147 are disordered.

Belongs to the universal ribosomal protein uL13 family. In terms of assembly, part of the 50S ribosomal subunit.

In terms of biological role, this protein is one of the early assembly proteins of the 50S ribosomal subunit, although it is not seen to bind rRNA by itself. It is important during the early stages of 50S assembly. In Mycobacterium bovis (strain BCG / Pasteur 1173P2), this protein is Large ribosomal subunit protein uL13.